A 937-amino-acid polypeptide reads, in one-letter code: Isoleucine--tRNA ligase (937 aa).

The 'HIGH' region motif lies at 58–68 (PYANGDIHIGH). Glu561 contacts L-isoleucyl-5'-AMP. Positions 602-606 (KMSKS) match the 'KMSKS' region motif. ATP is bound at residue Lys605. 4 residues coordinate Zn(2+): Cys900, Cys903, Cys920, and Cys923.

This sequence belongs to the class-I aminoacyl-tRNA synthetase family. IleS type 1 subfamily. As to quaternary structure, monomer. Zn(2+) is required as a cofactor.

It is found in the cytoplasm. The enzyme catalyses tRNA(Ile) + L-isoleucine + ATP = L-isoleucyl-tRNA(Ile) + AMP + diphosphate. Its function is as follows. Catalyzes the attachment of isoleucine to tRNA(Ile). As IleRS can inadvertently accommodate and process structurally similar amino acids such as valine, to avoid such errors it has two additional distinct tRNA(Ile)-dependent editing activities. One activity is designated as 'pretransfer' editing and involves the hydrolysis of activated Val-AMP. The other activity is designated 'posttransfer' editing and involves deacylation of mischarged Val-tRNA(Ile). In Alcanivorax borkumensis (strain ATCC 700651 / DSM 11573 / NCIMB 13689 / SK2), this protein is Isoleucine--tRNA ligase.